The sequence spans 60 residues: Myrmicitoxin(1)-Pr4b (60 aa).

The first 23 residues, Met-1 to Gly-23, serve as a signal peptide directing secretion. The propeptide occupies Glu-24–Ser-33. Gln-59 is modified (glutamine amide).

It belongs to the formicidae venom clade 2 family. In terms of tissue distribution, expressed by the venom gland.

It is found in the secreted. Toxin that causes a rapid and irreversible paralysis when intrathoracically injected into insects (blowflies). Does not cause spontaneous nocifensive behaviors by intraplantar injection in mice. This chain is Myrmicitoxin(1)-Pr4b, found in Pogonomyrmex rugosus (Desert harvester ant).